A 213-amino-acid polypeptide reads, in one-letter code: Cell division protein SepF 2 (213 aa).

Positions 16 to 89 are disordered; that stretch reads EDDGYDGRGF…ASLAAESSRP (74 aa). A compositionally biased stretch (acidic residues) spans 27–39; that stretch reads PDDDFEPELDPEP.

Belongs to the SepF family. In terms of assembly, homodimer. Interacts with FtsZ.

It localises to the cytoplasm. Its function is as follows. Cell division protein that is part of the divisome complex and is recruited early to the Z-ring. Probably stimulates Z-ring formation, perhaps through the cross-linking of FtsZ protofilaments. Its function overlaps with FtsA. The polypeptide is Cell division protein SepF 2 (Streptomyces coelicolor (strain ATCC BAA-471 / A3(2) / M145)).